A 144-amino-acid polypeptide reads, in one-letter code: MRLNTLSPAEGSKKAGKRLGRGIGSGLGKTGGRGHKGQKSRSGGGVRRGFEGGQMPLYRRLPKFGFTSRKAAITAEVRLSDLAKVEGGVVDLNTLKAANIIGIQIEFAKVILAGEVTTPVTVRGLRVTKGARAAIEAAGGKIEE.

The interval 1-54 is disordered; the sequence is MRLNTLSPAEGSKKAGKRLGRGIGSGLGKTGGRGHKGQKSRSGGGVRRGFEGGQ. Residues 21–31 show a composition bias toward gly residues; it reads RGIGSGLGKTG.

This sequence belongs to the universal ribosomal protein uL15 family. In terms of assembly, part of the 50S ribosomal subunit.

Its function is as follows. Binds to the 23S rRNA. The protein is Large ribosomal subunit protein uL15 of Salmonella enteritidis PT4 (strain P125109).